A 152-amino-acid chain; its full sequence is Small ribosomal subunit protein uS15 (152 aa).

The span at 1-11 shows a compositional bias: basic residues; sequence MAKMHTKRKGK. Positions 1 to 23 are disordered; that stretch reads MAKMHTKRKGKSSSTRPIRTDPP.

Belongs to the universal ribosomal protein uS15 family. Part of the 30S ribosomal subunit.

This chain is Small ribosomal subunit protein uS15, found in Methanosarcina acetivorans (strain ATCC 35395 / DSM 2834 / JCM 12185 / C2A).